The following is a 107-amino-acid chain: Phosphoribosyl-ATP pyrophosphatase (107 aa).

It belongs to the PRA-PH family.

Its subcellular location is the cytoplasm. The enzyme catalyses 1-(5-phospho-beta-D-ribosyl)-ATP + H2O = 1-(5-phospho-beta-D-ribosyl)-5'-AMP + diphosphate + H(+). Its pathway is amino-acid biosynthesis; L-histidine biosynthesis; L-histidine from 5-phospho-alpha-D-ribose 1-diphosphate: step 2/9. This chain is Phosphoribosyl-ATP pyrophosphatase, found in Bacillus cereus (strain G9842).